The following is a 449-amino-acid chain: Delta(8)-fatty-acid desaturase 1 (449 aa).

In terms of domain architecture, Cytochrome b5 heme-binding spans 7 to 91 (KKYITNEDLK…IRDFQVSEVS (85 aa)). Heme contacts are provided by His42 and His65. Transmembrane regions (helical) follow at residues 113–133 (VTLY…YGVL) and 138–158 (VFAH…SAYI). The short motif at 160-164 (HDSGH) is the Histidine box-1 element. A helical transmembrane segment spans residues 173 to 195 (YNRFAQLLSGNCLTGISIAWWKW). The Histidine box-2 signature appears at 197 to 201 (HNAHH). The next 3 helical transmembrane spans lie at 255–275 (YYPV…LLLF), 284–304 (ALNF…VSCL), and 311–331 (FFFV…FTLN). The Histidine box-3 motif lies at 374 to 378 (QLEHH).

This sequence belongs to the fatty acid desaturase type 1 family. Fe cation is required as a cofactor. Highly expressed in flowers. Expressed in roots, leaves, stems and siliques.

It localises to the endoplasmic reticulum membrane. It catalyses the reaction an N-acyl-(4R)-4-hydroxysphinganine + 2 Fe(II)-[cytochrome b5] + O2 + 2 H(+) = a (4R,8E)-4-hydroxysphingenine ceramide + 2 Fe(III)-[cytochrome b5] + 2 H2O. The catalysed reaction is an N-acyl-(4R)-4-hydroxysphinganine + 2 Fe(II)-[cytochrome b5] + O2 + 2 H(+) = a (4R,8Z)-4-hydroxysphing-8-enine ceramide + 2 Fe(III)-[cytochrome b5] + 2 H2O. Plays a major role as delta(8)-fatty-acid desaturase which introduces a double bond at the 8-position in the long-chain base (LCB) of ceramides with or without a hydroxy group at the 4-position. The enzyme produces both the 8E and 8Z isomers (in a 4:1 ratio). This structural modification contributes to the quantitative partitioning of ceramides between the two major sphingolipid classes, glucosylceramides and glycosylinositolphosphoryl ceramides. Sphingolipids are important membrane components involved in environmental stress responses, such as resistance to chilling, and act as cell signaling molecules. The sequence is that of Delta(8)-fatty-acid desaturase 1 (SLD1) from Arabidopsis thaliana (Mouse-ear cress).